A 555-amino-acid chain; its full sequence is Urocanate hydratase (555 aa).

Residues 52 to 53, Gln130, 176 to 178, Glu196, Arg201, 242 to 243, 263 to 267, 273 to 274, and Tyr322 contribute to the NAD(+) site; these read GG, GMG, NA, QTSAH, and YL. The active site involves Cys410. Gly492 is a binding site for NAD(+).

The protein belongs to the urocanase family. The cofactor is NAD(+).

Its subcellular location is the cytoplasm. The enzyme catalyses 4-imidazolone-5-propanoate = trans-urocanate + H2O. It functions in the pathway amino-acid degradation; L-histidine degradation into L-glutamate; N-formimidoyl-L-glutamate from L-histidine: step 2/3. In terms of biological role, catalyzes the conversion of urocanate to 4-imidazolone-5-propionate. This Shewanella baltica (strain OS185) protein is Urocanate hydratase.